Reading from the N-terminus, the 241-residue chain is Adenosylcobinamide-GDP ribazoletransferase (241 aa).

Helical transmembrane passes span 34–54, 55–75, 109–129, 133–153, 165–185, 186–206, and 221–241; these read RIPAYFTIVGYIPGLIYFTGS, FLSLNFGIIAPLLSIVLGFYL, VGPFAVFYGVLYVIVFWELIT, PVAFVFGSVFGRYTMDVVLVF, MLFPFNRFLLVPATLFTLPLL, LIDVKLFLVSIFSSWLVGFLI, and VLGGSCLIGQIVVLLILNYLI.

It belongs to the CobS family. Mg(2+) serves as cofactor.

It is found in the cell inner membrane. It catalyses the reaction alpha-ribazole + adenosylcob(III)inamide-GDP = adenosylcob(III)alamin + GMP + H(+). The catalysed reaction is alpha-ribazole 5'-phosphate + adenosylcob(III)inamide-GDP = adenosylcob(III)alamin 5'-phosphate + GMP + H(+). Its pathway is cofactor biosynthesis; adenosylcobalamin biosynthesis; adenosylcobalamin from cob(II)yrinate a,c-diamide: step 7/7. Joins adenosylcobinamide-GDP and alpha-ribazole to generate adenosylcobalamin (Ado-cobalamin). Also synthesizes adenosylcobalamin 5'-phosphate from adenosylcobinamide-GDP and alpha-ribazole 5'-phosphate. The protein is Adenosylcobinamide-GDP ribazoletransferase of Fervidobacterium nodosum (strain ATCC 35602 / DSM 5306 / Rt17-B1).